The chain runs to 42 residues: Photosystem I reaction center subunit IX (42 aa).

Residues Tyr-7–Ile-27 form a helical membrane-spanning segment.

This sequence belongs to the PsaJ family.

It localises to the plastid. It is found in the chloroplast thylakoid membrane. Its function is as follows. May help in the organization of the PsaE and PsaF subunits. The chain is Photosystem I reaction center subunit IX from Nephroselmis olivacea (Green alga).